The chain runs to 289 residues: MALKEEIFDQNTTLFAVLDENEVTEIKSIQSSVTAVKTQLDQQKLQLDGLAKVVDNNQARNEEQFVNINTTLVEMSSEVDKLTITTSQQAKQINTLATTLNELDQTTKDSLDTLNTTTESLKKQVLFNTDEITVLKVDVATVTQKQQDVEHSLVTMKDEIGELHVSVNANANSIEALRTRIAALEIRDVGPWVLKDRIYKFVINKPNGTTRYTTIYFFADVYYSTGVRAAPTNSGTATSILTITSLTTSYSLANVPVLKGVPYRVNGYFANGNNIEDITGSTSVIYDSM.

This is an uncharacterized protein from Drosophila melanogaster (Fruit fly).